We begin with the raw amino-acid sequence, 322 residues long: Corticotropin-releasing factor-binding protein (322 aa).

An N-terminal signal peptide occupies residues 1–24 (MSPNFKLQCHFILILLTALRGESR). 5 disulfides stabilise this stretch: Cys60/Cys81, Cys104/Cys141, Cys183/Cys205, Cys237/Cys264, and Cys277/Cys318. A glycan (N-linked (GlcNAc...) asparagine) is linked at Asn204.

It belongs to the CRF-binding protein family.

The protein localises to the secreted. Its function is as follows. Binds CRF and inactivates it. May prevent inappropriate pituitary-adrenal stimulation in pregnancy. This is Corticotropin-releasing factor-binding protein (Crhbp) from Mus musculus (Mouse).